A 248-amino-acid chain; its full sequence is UPF0736 protein BCE_1296 (248 aa).

The protein belongs to the UPF0736 family.

The protein is UPF0736 protein BCE_1296 of Bacillus cereus (strain ATCC 10987 / NRS 248).